Consider the following 194-residue polypeptide: dCTP deaminase (194 aa).

DCTP contacts are provided by residues 110–115 (RSSLAR), Asp128, 136–138 (VLE), Tyr171, Lys178, and Gln182. The active-site Proton donor/acceptor is Glu138. The segment at 174–194 (RKSSKYKDQQEAVASRISQDK) is disordered.

The protein belongs to the dCTP deaminase family. Homotrimer.

The catalysed reaction is dCTP + H2O + H(+) = dUTP + NH4(+). Its pathway is pyrimidine metabolism; dUMP biosynthesis; dUMP from dCTP (dUTP route): step 1/2. In terms of biological role, catalyzes the deamination of dCTP to dUTP. In Shewanella frigidimarina (strain NCIMB 400), this protein is dCTP deaminase.